Reading from the N-terminus, the 122-residue chain is Small ribosomal subunit protein uS13 (122 aa).

Positions 98–122 (VRGQRTHTNARTRKGPAKAIAGKKK) are disordered.

It belongs to the universal ribosomal protein uS13 family. Part of the 30S ribosomal subunit. Forms a loose heterodimer with protein S19. Forms two bridges to the 50S subunit in the 70S ribosome.

In terms of biological role, located at the top of the head of the 30S subunit, it contacts several helices of the 16S rRNA. In the 70S ribosome it contacts the 23S rRNA (bridge B1a) and protein L5 of the 50S subunit (bridge B1b), connecting the 2 subunits; these bridges are implicated in subunit movement. Contacts the tRNAs in the A and P-sites. The chain is Small ribosomal subunit protein uS13 from Jannaschia sp. (strain CCS1).